A 251-amino-acid chain; its full sequence is Ubiquinone/menaquinone biosynthesis C-methyltransferase UbiE (251 aa).

S-adenosyl-L-methionine-binding positions include Thr-74, Asp-95, and Asn-123–Ala-124.

Belongs to the class I-like SAM-binding methyltransferase superfamily. MenG/UbiE family.

The catalysed reaction is a 2-demethylmenaquinol + S-adenosyl-L-methionine = a menaquinol + S-adenosyl-L-homocysteine + H(+). It catalyses the reaction a 2-methoxy-6-(all-trans-polyprenyl)benzene-1,4-diol + S-adenosyl-L-methionine = a 5-methoxy-2-methyl-3-(all-trans-polyprenyl)benzene-1,4-diol + S-adenosyl-L-homocysteine + H(+). Its pathway is quinol/quinone metabolism; menaquinone biosynthesis; menaquinol from 1,4-dihydroxy-2-naphthoate: step 2/2. The protein operates within cofactor biosynthesis; ubiquinone biosynthesis. In terms of biological role, methyltransferase required for the conversion of demethylmenaquinol (DMKH2) to menaquinol (MKH2) and the conversion of 2-polyprenyl-6-methoxy-1,4-benzoquinol (DDMQH2) to 2-polyprenyl-3-methyl-6-methoxy-1,4-benzoquinol (DMQH2). This Erwinia tasmaniensis (strain DSM 17950 / CFBP 7177 / CIP 109463 / NCPPB 4357 / Et1/99) protein is Ubiquinone/menaquinone biosynthesis C-methyltransferase UbiE.